The sequence spans 150 residues: Ubiquitin-conjugating enzyme E2 3 (150 aa).

Residues 4 to 150 (PAKKRLMWDF…VIEIVEQSYV (147 aa)) enclose the UBC core domain. C88 functions as the Glycyl thioester intermediate in the catalytic mechanism.

This sequence belongs to the ubiquitin-conjugating enzyme family. Expressed in all tissues examined. Lower levels found in leaves.

The enzyme catalyses S-ubiquitinyl-[E1 ubiquitin-activating enzyme]-L-cysteine + [E2 ubiquitin-conjugating enzyme]-L-cysteine = [E1 ubiquitin-activating enzyme]-L-cysteine + S-ubiquitinyl-[E2 ubiquitin-conjugating enzyme]-L-cysteine.. It participates in protein modification; protein ubiquitination. In terms of biological role, accepts the ubiquitin from the E1 complex and catalyzes its covalent attachment to other proteins. This is Ubiquitin-conjugating enzyme E2 3 (UBC3) from Arabidopsis thaliana (Mouse-ear cress).